The chain runs to 543 residues: CTP synthase (543 aa).

Residues 1-265 (MTRYIFVTGG…DDFVVERFGL (265 aa)) are amidoligase domain. Ser-13 is a CTP binding site. Residue Ser-13 coordinates UTP. ATP-binding positions include 14 to 19 (SLGKGI) and Asp-71. Mg(2+) is bound by residues Asp-71 and Glu-139. Residues 146 to 148 (DIE), 186 to 191 (KTKPTQ), and Lys-222 each bind CTP. UTP contacts are provided by residues 186-191 (KTKPTQ) and Lys-222. One can recognise a Glutamine amidotransferase type-1 domain in the interval 290–541 (TIAMVGKYME…VKAALAQHQK (252 aa)). An L-glutamine-binding site is contributed by Gly-351. The active-site Nucleophile; for glutamine hydrolysis is the Cys-378. L-glutamine is bound by residues 379-382 (LGMQ), Glu-402, and Arg-469. Catalysis depends on residues His-514 and Glu-516.

It belongs to the CTP synthase family. Homotetramer.

It catalyses the reaction UTP + L-glutamine + ATP + H2O = CTP + L-glutamate + ADP + phosphate + 2 H(+). The catalysed reaction is L-glutamine + H2O = L-glutamate + NH4(+). It carries out the reaction UTP + NH4(+) + ATP = CTP + ADP + phosphate + 2 H(+). It participates in pyrimidine metabolism; CTP biosynthesis via de novo pathway; CTP from UDP: step 2/2. Allosterically activated by GTP, when glutamine is the substrate; GTP has no effect on the reaction when ammonia is the substrate. The allosteric effector GTP functions by stabilizing the protein conformation that binds the tetrahedral intermediate(s) formed during glutamine hydrolysis. Inhibited by the product CTP, via allosteric rather than competitive inhibition. Its function is as follows. Catalyzes the ATP-dependent amination of UTP to CTP with either L-glutamine or ammonia as the source of nitrogen. Regulates intracellular CTP levels through interactions with the four ribonucleotide triphosphates. This chain is CTP synthase, found in Pseudomonas fluorescens (strain Pf0-1).